Reading from the N-terminus, the 422-residue chain is Serine hydroxymethyltransferase (422 aa).

121 to 123 (GHI) contributes to the (6S)-5,6,7,8-tetrahydrofolate binding site. Lys-227 bears the N6-(pyridoxal phosphate)lysine mark. (6S)-5,6,7,8-tetrahydrofolate is bound at residue Glu-245.

The protein belongs to the SHMT family. Homodimer. Pyridoxal 5'-phosphate serves as cofactor.

It is found in the cytoplasm. It catalyses the reaction 5,10-methylenetetrahydromethanopterin + glycine + H2O = 5,6,7,8-tetrahydromethanopterin + L-serine. It participates in amino-acid biosynthesis; glycine biosynthesis; glycine from L-serine: step 1/1. In terms of biological role, catalyzes the reversible interconversion of serine and glycine with tetrahydromethanopterin (H4MPT) serving as the one-carbon carrier. Also exhibits a pteridine-independent aldolase activity toward beta-hydroxyamino acids, producing glycine and aldehydes, via a retro-aldol mechanism. This is Serine hydroxymethyltransferase from Methanobrevibacter smithii (strain ATCC 35061 / DSM 861 / OCM 144 / PS).